Here is a 208-residue protein sequence, read N- to C-terminus: MQAQTLEVTMRPEVGKQAARRLRRQGKLPGIIYGKKIANLAVIIPARQLEHILATEGENALLKLVVSGDGQNKEFTAVIREVQRHPLKGNLTHVDFYQVSMEDKLRATVPVILEGEARGVKEGGILQHGVREIEIESLPADLPESIVVDVSHLGVGEHLTVGEIKVPAGVKILSEPDTVIATVVTTRAVETETEEETTTGESPAQPAE.

The segment at 188–208 is disordered; sequence AVETETEEETTTGESPAQPAE.

Belongs to the bacterial ribosomal protein bL25 family. CTC subfamily. Part of the 50S ribosomal subunit; part of the 5S rRNA/L5/L18/L25 subcomplex. Contacts the 5S rRNA. Binds to the 5S rRNA independently of L5 and L18.

Functionally, this is one of the proteins that binds to the 5S RNA in the ribosome where it forms part of the central protuberance. This Moorella thermoacetica (strain ATCC 39073 / JCM 9320) protein is Large ribosomal subunit protein bL25.